A 544-amino-acid polypeptide reads, in one-letter code: CTP synthase (544 aa).

Residues 1–266 (MTKFIFVTGG…DDLICERFGL (266 aa)) are amidoligase domain. Residue S13 participates in CTP binding. Residue S13 coordinates UTP. Residues 14 to 19 (SLGKGI) and D71 contribute to the ATP site. D71 and E140 together coordinate Mg(2+). Residues 147–149 (DIE), 187–192 (KTKPTQ), and K223 each bind CTP. UTP is bound by residues 187–192 (KTKPTQ) and K223. The region spanning 291–543 (TVAMVGKYVE…VKAAKNYSEA (253 aa)) is the Glutamine amidotransferase type-1 domain. G354 contributes to the L-glutamine binding site. C381 acts as the Nucleophile; for glutamine hydrolysis in catalysis. Residues 382–385 (LGMQ), E404, and R471 each bind L-glutamine. Active-site residues include H516 and E518.

It belongs to the CTP synthase family. As to quaternary structure, homotetramer.

It catalyses the reaction UTP + L-glutamine + ATP + H2O = CTP + L-glutamate + ADP + phosphate + 2 H(+). It carries out the reaction L-glutamine + H2O = L-glutamate + NH4(+). The enzyme catalyses UTP + NH4(+) + ATP = CTP + ADP + phosphate + 2 H(+). It functions in the pathway pyrimidine metabolism; CTP biosynthesis via de novo pathway; CTP from UDP: step 2/2. Its activity is regulated as follows. Allosterically activated by GTP, when glutamine is the substrate; GTP has no effect on the reaction when ammonia is the substrate. The allosteric effector GTP functions by stabilizing the protein conformation that binds the tetrahedral intermediate(s) formed during glutamine hydrolysis. Inhibited by the product CTP, via allosteric rather than competitive inhibition. Catalyzes the ATP-dependent amination of UTP to CTP with either L-glutamine or ammonia as the source of nitrogen. Regulates intracellular CTP levels through interactions with the four ribonucleotide triphosphates. The chain is CTP synthase from Psychrobacter arcticus (strain DSM 17307 / VKM B-2377 / 273-4).